A 230-amino-acid chain; its full sequence is Cytidylate kinase (230 aa).

Residue 12-20 participates in ATP binding; the sequence is GPSGAGKGT.

This sequence belongs to the cytidylate kinase family. Type 1 subfamily.

It is found in the cytoplasm. It catalyses the reaction CMP + ATP = CDP + ADP. It carries out the reaction dCMP + ATP = dCDP + ADP. This is Cytidylate kinase from Yersinia enterocolitica serotype O:8 / biotype 1B (strain NCTC 13174 / 8081).